The chain runs to 171 residues: Secreted thaumatin-like protein calA (171 aa).

The first 18 residues, 1 to 18, serve as a signal peptide directing secretion; that stretch reads MLFNKIISLAATLATASA. 2 N-linked (GlcNAc...) asparagine glycosylation sites follow: Asn37 and Asn141. 2 cysteine pairs are disulfide-bonded: Cys130-Cys157 and Cys135-Cys142.

The protein belongs to the thaumatin family.

It is found in the secreted. Its subcellular location is the extracellular space. The protein localises to the extracellular matrix. The protein resides in the cell wall. Its function is as follows. Secreted thaumatin-like protein that, with cetA, plays an essential role in early conidial germination with a possible role in cell wall remodeling. In Emericella nidulans (strain FGSC A4 / ATCC 38163 / CBS 112.46 / NRRL 194 / M139) (Aspergillus nidulans), this protein is Secreted thaumatin-like protein calA.